The following is a 247-amino-acid chain: Caffeoyl-CoA O-methyltransferase 2 (247 aa).

Lysine 21 serves as a coordination point for substrate. S-adenosyl-L-methionine is bound by residues threonine 63, glutamate 85, 87–88 (GV), serine 93, aspartate 111, and alanine 140. Aspartate 163 contributes to the substrate binding site. Position 163 (aspartate 163) interacts with a divalent metal cation. Position 165 (aspartate 165) interacts with S-adenosyl-L-methionine. A divalent metal cation contacts are provided by aspartate 189 and asparagine 190. Asparagine 194 is a binding site for substrate.

Belongs to the class I-like SAM-binding methyltransferase superfamily. Cation-dependent O-methyltransferase family. CCoAMT subfamily. It depends on a divalent metal cation as a cofactor.

It catalyses the reaction (E)-caffeoyl-CoA + S-adenosyl-L-methionine = (E)-feruloyl-CoA + S-adenosyl-L-homocysteine + H(+). It functions in the pathway aromatic compound metabolism; phenylpropanoid biosynthesis. Methylates caffeoyl-CoA to feruloyl-CoA and 5-hydroxyferuloyl-CoA to sinapoyl-CoA. Plays a role in the synthesis of feruloylated polysaccharides. Involved in the reinforcement of the plant cell wall. Also involved in the responding to wounding or pathogen challenge by the increased formation of cell wall-bound ferulic acid polymers. The chain is Caffeoyl-CoA O-methyltransferase 2 (CCOAOMT2) from Populus trichocarpa (Western balsam poplar).